The chain runs to 130 residues: Small ribosomal subunit protein eS17 (130 aa).

The span at 74–84 shows a compositional bias: basic and acidic residues; it reads QEEERERRDNY. Positions 74–97 are disordered; it reads QEEERERRDNYMPEISTVDPSQLT.

Belongs to the eukaryotic ribosomal protein eS17 family.

The protein is Small ribosomal subunit protein eS17 (rps-17) of Caenorhabditis elegans.